Here is a 173-residue protein sequence, read N- to C-terminus: Beta-defensin 129 (173 aa).

The first 19 residues, 1–19 (MKLLFPIFASLMLQYKVNT), serve as a signal peptide directing secretion. 3 disulfides stabilise this stretch: cysteine 27–cysteine 53, cysteine 34–cysteine 48, and cysteine 38–cysteine 54. The segment at 144–173 (STKSNIKESRDSATASPPPAPPPPNTLPTP) is disordered. The span at 159–173 (SPPPAPPPPNTLPTP) shows a compositional bias: pro residues.

Belongs to the beta-defensin family.

The protein resides in the secreted. Has antibacterial activity. The sequence is that of Beta-defensin 129 (DEFB129) from Hylobates lar (Lar gibbon).